The chain runs to 465 residues: Cysteine--tRNA ligase (465 aa).

C28 is a Zn(2+) binding site. Residues 30–40 carry the 'HIGH' region motif; that stretch reads MTVYDYCHLGH. The Zn(2+) site is built by C209, H234, and E238. Residues 266-270 carry the 'KMSKS' region motif; it reads KMSKS. K269 contributes to the ATP binding site.

Belongs to the class-I aminoacyl-tRNA synthetase family. Monomer. Zn(2+) is required as a cofactor.

It localises to the cytoplasm. The enzyme catalyses tRNA(Cys) + L-cysteine + ATP = L-cysteinyl-tRNA(Cys) + AMP + diphosphate. The chain is Cysteine--tRNA ligase from Methylococcus capsulatus (strain ATCC 33009 / NCIMB 11132 / Bath).